The primary structure comprises 381 residues: Cytochrome b (381 aa).

Transmembrane regions (helical) follow at residues Phe34 to Met54, Trp78 to Ile99, Trp114 to Leu134, and Phe179 to Leu199. Positions 84 and 98 each coordinate heme b. Positions 183 and 197 each coordinate heme b. Residue His202 coordinates a ubiquinone. Helical transmembrane passes span Tyr227–Met247, Leu289–His309, Met321–Gly341, and Phe348–Pro368.

Belongs to the cytochrome b family. The cytochrome bc1 complex contains 3 respiratory subunits (MT-CYB, CYC1 and UQCRFS1), 2 core proteins (UQCRC1 and UQCRC2) and probably 6 low-molecular weight proteins. Heme b serves as cofactor.

It localises to the mitochondrion inner membrane. In terms of biological role, component of the ubiquinol-cytochrome c reductase complex (complex III or cytochrome b-c1 complex) that is part of the mitochondrial respiratory chain. The b-c1 complex mediates electron transfer from ubiquinol to cytochrome c. Contributes to the generation of a proton gradient across the mitochondrial membrane that is then used for ATP synthesis. The chain is Cytochrome b (mt-cyb) from Carcharhinus plumbeus (Sandbar shark).